A 167-amino-acid polypeptide reads, in one-letter code: CKLF-like MARVEL transmembrane domain-containing protein 7 (167 aa).

The MARVEL domain maps to 32 to 158 (YPLTHGALFK…SLWLSYKITC (127 aa)). Transmembrane regions (helical) follow at residues 35-55 (THGALFKVAQMVTLLIAFICV), 69-89 (FEVVTMCDLIMILIFYLVHLF), 102-122 (LSELLHYLIGTLLLLIASIVI), and 132-152 (LVAGAIFGFLASFLCLASLWL).

Belongs to the chemokine-like factor family.

Its subcellular location is the membrane. In Mus musculus (Mouse), this protein is CKLF-like MARVEL transmembrane domain-containing protein 7 (Cmtm7).